Consider the following 594-residue polypeptide: Aspartate--tRNA(Asp/Asn) ligase (594 aa).

Glu-173 is a binding site for L-aspartate. The interval 197–200 (QLFK) is aspartate. Arg-219 provides a ligand contact to L-aspartate. Residues 219-221 (RDE) and Gln-228 each bind ATP. Position 449 (His-449) interacts with L-aspartate. Glu-482 is a binding site for ATP. Residue Arg-489 participates in L-aspartate binding. 534-537 (GLDR) lines the ATP pocket.

The protein belongs to the class-II aminoacyl-tRNA synthetase family. Type 1 subfamily. As to quaternary structure, homodimer.

It is found in the cytoplasm. It catalyses the reaction tRNA(Asx) + L-aspartate + ATP = L-aspartyl-tRNA(Asx) + AMP + diphosphate. Its function is as follows. Aspartyl-tRNA synthetase with relaxed tRNA specificity since it is able to aspartylate not only its cognate tRNA(Asp) but also tRNA(Asn). Reaction proceeds in two steps: L-aspartate is first activated by ATP to form Asp-AMP and then transferred to the acceptor end of tRNA(Asp/Asn). This chain is Aspartate--tRNA(Asp/Asn) ligase, found in Saccharophagus degradans (strain 2-40 / ATCC 43961 / DSM 17024).